The primary structure comprises 37 residues: Glucagon-1 (37 aa).

It belongs to the glucagon family.

Its subcellular location is the secreted. Functionally, glucagon plays a key role in glucose metabolism and homeostasis. Regulates blood glucose by increasing gluconeogenesis and decreasing glycolysis. This chain is Glucagon-1, found in Huso dauricus (Kaluga sturgeon).